The sequence spans 156 residues: Ribosomal RNA large subunit methyltransferase H (156 aa).

S-adenosyl-L-methionine is bound by residues leucine 73, glycine 104, and 123–128 (ISSMTL).

The protein belongs to the RNA methyltransferase RlmH family. Homodimer.

The protein resides in the cytoplasm. It carries out the reaction pseudouridine(1915) in 23S rRNA + S-adenosyl-L-methionine = N(3)-methylpseudouridine(1915) in 23S rRNA + S-adenosyl-L-homocysteine + H(+). Its function is as follows. Specifically methylates the pseudouridine at position 1915 (m3Psi1915) in 23S rRNA. The protein is Ribosomal RNA large subunit methyltransferase H of Burkholderia multivorans (strain ATCC 17616 / 249).